The primary structure comprises 259 residues: 4-hydroxy-tetrahydrodipicolinate reductase (259 aa).

NAD(+)-binding positions include 9-14 (GAGGRM) and E35. R36 contributes to the NADP(+) binding site. NAD(+) contacts are provided by residues 92 to 94 (GTT) and 116 to 119 (APNM). Catalysis depends on H149, which acts as the Proton donor/acceptor. H150 lines the (S)-2,3,4,5-tetrahydrodipicolinate pocket. The active-site Proton donor is K153. (S)-2,3,4,5-tetrahydrodipicolinate is bound at residue 159 to 160 (GT).

Belongs to the DapB family.

Its subcellular location is the cytoplasm. The catalysed reaction is (S)-2,3,4,5-tetrahydrodipicolinate + NAD(+) + H2O = (2S,4S)-4-hydroxy-2,3,4,5-tetrahydrodipicolinate + NADH + H(+). It carries out the reaction (S)-2,3,4,5-tetrahydrodipicolinate + NADP(+) + H2O = (2S,4S)-4-hydroxy-2,3,4,5-tetrahydrodipicolinate + NADPH + H(+). Its pathway is amino-acid biosynthesis; L-lysine biosynthesis via DAP pathway; (S)-tetrahydrodipicolinate from L-aspartate: step 4/4. In terms of biological role, catalyzes the conversion of 4-hydroxy-tetrahydrodipicolinate (HTPA) to tetrahydrodipicolinate. The polypeptide is 4-hydroxy-tetrahydrodipicolinate reductase (Nitratidesulfovibrio vulgaris (strain DSM 19637 / Miyazaki F) (Desulfovibrio vulgaris)).